Reading from the N-terminus, the 429-residue chain is Citrate synthase, chromosomal (429 aa).

Catalysis depends on residues histidine 306 and aspartate 364.

This sequence belongs to the citrate synthase family.

It carries out the reaction oxaloacetate + acetyl-CoA + H2O = citrate + CoA + H(+). It functions in the pathway carbohydrate metabolism; tricarboxylic acid cycle; isocitrate from oxaloacetate: step 1/2. This chain is Citrate synthase, chromosomal (ccsA), found in Rhizobium tropici.